A 1021-amino-acid chain; its full sequence is MKRKCLSKRLMLAITMATIFTVNSTLPIYAAVDKNNATAAVQNESKRYTVSYLKTLNYYDLVDLLVKTEIENLPDLFQYSSDAKEFYGNKTRMSFIMDEIGRRAPQYTEIDHKGIPTLVEVVRAGFYLGFHNKELNEINKRSFKERVIPSILAIQKNPNFKLGTEVQDKIVSATGLLAGNETAPPEVVNNFTPILQDCIKNIDRYALDDLKSKALFNVLAAPTYDITEYLRATKEKPENTPWYGKIDGFINELKKLALYGKINDNNSWIIDNGIYHIAPLGKLHSNNKIGIETLTEVMKVYPYLSMQHLQSADQIKRHYDSKDAEGNKIPLDKFKKEGKEKYCPKTYTFDDGKVIIKAGARVEEEKVKRLYWASKEVNSQFFRVYGIDKPLEEGNPDDILTMVIYNSPEEYKLNSVLYGYDTNNGGMYIEPEGTFFTYEREAQESTYTLEELFRHEYTHYLQGRYAVPGQWGRTKLYDNDRLTWYEEGGAELFAGSTRTSGILPRKSIVSNIHNTTRNNRYKLSDTVHSKYGASFEFYNYACMFMDYMYNKDMGILNKLNDLAKNNDVDGYDNYIRDLSSNYALNDKYQDHMQERIDNYENLTVPFVADDYLVRHAYKNPNEIYSEISEVAKLKDAKSEVKKSQYFSTFTLRGSYTGGASKGKLEDQKAMNKFIDDSLKKLDTYSWSGYKTLTAYFTNYKVDSSNRVTYDVVFHGYLPNEGDSKNSLPYGKINGTYKGTEKEKIKFSSEGSFDPDGKIVSYEWDFGDGNKSNEENPEHSYDKVGTYTVKLKVTDDKGESSVSTTTAEIKDLSENKLPVIYMHVPKSGALNQKVVFYGKGTYDPDGSIAGYQWDFGDGSDFSSEQNPSHVYTKKGEYTVTLRVMDSSGQMSEKTMKIKITDPVYPIGTEKEPNNSKETASGPIVPGIPVSGTIENTSDQDYFYFDVITPGEVKIDINKLGYGGATWVVYDENNNAVSYATDDGQNLSGKFKADKPGRYYIHLYMFNGSYMPYRINIEGSVGR.

Positions 1–30 are cleaved as a signal peptide; it reads MKRKCLSKRLMLAITMATIFTVNSTLPIYA. The propeptide occupies 31 to 40; that stretch reads AVDKNNATAA. The tract at residues 41–320 is activator domain; it reads VQNESKRYTV…SADQIKRHYD (280 aa). An S1 metalloprotease domain region spans residues 41–717; sequence VQNESKRYTV…TYDVVFHGYL (677 aa). The interval 330–601 is catalytic subdomain; it reads PLDKFKKEGK…MQERIDNYEN (272 aa). Aspartate 421 is a binding site for Zn(2+). Glutamate 430 is a Ca(2+) binding site. A Zn(2+)-binding site is contributed by histidine 455. Glutamate 456 is an active-site residue. Histidine 459 contacts Zn(2+). Residues glycine 463, valine 467, and glycine 469 each contribute to the Ca(2+) site. Residue glutamate 487 coordinates Zn(2+). Residues 609 to 721 are helper subdomain; that stretch reads DDYLVRHAYK…VFHGYLPNEG (113 aa). The tract at residues 718-810 is S2a domain; the sequence is PNEGDSKNSL…VSTTTAEIKD (93 aa). Ca(2+) contacts are provided by asparagine 725, serine 726, aspartate 753, aspartate 755, aspartate 794, asparagine 814, lysine 815, aspartate 842, aspartate 844, aspartate 884, glutamate 908, glutamate 910, asparagine 912, asparagine 913, threonine 931, aspartate 937, glutamine 938, and aspartate 939. One can recognise a PKD 1 domain in the interval 727–808; that stretch reads LPYGKINGTY…SSVSTTTAEI (82 aa). The tract at residues 811-904 is S2b domain; the sequence is LSENKLPVIY…KIKITDPVYP (94 aa). In terms of domain architecture, PKD 2 spans 816-905; it reads LPVIYMHVPK…IKITDPVYPI (90 aa). Residues 903-922 form a disordered region; sequence YPIGTEKEPNNSKETASGPI. The segment at 905–1021 is S3 collagen-binding domain; it reads IGTEKEPNNS…RINIEGSVGR (117 aa). The collagen-binding stretch occupies residues 1002-1004; the sequence is YMF.

Belongs to the peptidase M9B family. Collagenase subfamily. The cofactor is Ca(2+). Zn(2+) is required as a cofactor. In terms of processing, upon purification gives rise to 98 kDa, 105 kDa and 116 kDa (full-length) proteins, all of which have the same N-terminus.

It is found in the secreted. It carries out the reaction Digestion of native collagen in the triple helical region at Xaa-|-Gly bonds. With synthetic peptides, a preference is shown for Gly at P3 and P1', Pro and Ala at P2 and P2', and hydroxyproline, Ala or Arg at P3'.. Its activity is regulated as follows. Inhibited by EDTA. Inhibited by 1-10-phenanthroline. Inhibited by broad-spectrum zinc metalloprotease inhibitor batimastat. N-aryl mercaptoacetamide-based inhibitors have been isolated that act on clostridial collagenases with submicromolar affinity while having negligibile activity on human collagenases. Functionally, clostridial collagenases are among the most efficient degraders of eukaryotic collagen known; saprophytes use collagen as a carbon source while pathogens additionally digest collagen to aid in host colonization. Has both tripeptidylcarboxypeptidase on Gly-X-Y and endopeptidase activities; the endopeptidase cuts within the triple helix region of collagen while tripeptidylcarboxypeptidase successively digests the exposed ends, thus clostridial collagenases can digest large sections of collagen. The full-length protein has collagenase activity, while both the 116 kDa and 98 kDa forms act on gelatin. In vitro digestion of soluble calf skin collagen fibrils requires both ColG and ColH; ColG forms missing the second collagen-binding domain is also synergistic with ColH, although their overall efficiency is decreased. Digestion of collagen requires Ca(2+) and is inhibited by EDTA. The activator domain (residues 119-388) and catalytic subdomain (330-601) open and close around substrate allowing digestion when the protein is closed. The chain is Collagenase ColH from Hathewaya histolytica (Clostridium histolyticum).